A 451-amino-acid chain; its full sequence is Bifunctional protein GlmU (451 aa).

The tract at residues 1–225 (MSLAVVILAA…EFEIQGVNDR (225 aa)) is pyrophosphorylase. UDP-N-acetyl-alpha-D-glucosamine contacts are provided by residues 8–11 (LAAG), Lys22, Gln73, 78–79 (GT), 99–101 (YGD), Gly135, Glu150, Asn165, and Asn223. Residue Asp101 participates in Mg(2+) binding. Residue Asn223 participates in Mg(2+) binding. Positions 226 to 246 (IQLAQLEREWQKHIAEVIMSK) are linker. The N-acetyltransferase stretch occupies residues 247–451 (GVSVADPSRI…IDTWQRPVKK (205 aa)). UDP-N-acetyl-alpha-D-glucosamine contacts are provided by Arg329 and Lys347. The active-site Proton acceptor is His359. The UDP-N-acetyl-alpha-D-glucosamine site is built by Tyr362 and Asn373. Acetyl-CoA contacts are provided by residues Ala376, 382-383 (NY), Ser401, Ala419, and Arg436.

The protein in the N-terminal section; belongs to the N-acetylglucosamine-1-phosphate uridyltransferase family. In the C-terminal section; belongs to the transferase hexapeptide repeat family. As to quaternary structure, homotrimer. Mg(2+) is required as a cofactor.

The protein localises to the cytoplasm. The catalysed reaction is alpha-D-glucosamine 1-phosphate + acetyl-CoA = N-acetyl-alpha-D-glucosamine 1-phosphate + CoA + H(+). It carries out the reaction N-acetyl-alpha-D-glucosamine 1-phosphate + UTP + H(+) = UDP-N-acetyl-alpha-D-glucosamine + diphosphate. It participates in nucleotide-sugar biosynthesis; UDP-N-acetyl-alpha-D-glucosamine biosynthesis; N-acetyl-alpha-D-glucosamine 1-phosphate from alpha-D-glucosamine 6-phosphate (route II): step 2/2. It functions in the pathway nucleotide-sugar biosynthesis; UDP-N-acetyl-alpha-D-glucosamine biosynthesis; UDP-N-acetyl-alpha-D-glucosamine from N-acetyl-alpha-D-glucosamine 1-phosphate: step 1/1. Its pathway is bacterial outer membrane biogenesis; LPS lipid A biosynthesis. Catalyzes the last two sequential reactions in the de novo biosynthetic pathway for UDP-N-acetylglucosamine (UDP-GlcNAc). The C-terminal domain catalyzes the transfer of acetyl group from acetyl coenzyme A to glucosamine-1-phosphate (GlcN-1-P) to produce N-acetylglucosamine-1-phosphate (GlcNAc-1-P), which is converted into UDP-GlcNAc by the transfer of uridine 5-monophosphate (from uridine 5-triphosphate), a reaction catalyzed by the N-terminal domain. This chain is Bifunctional protein GlmU, found in Francisella philomiragia subsp. philomiragia (strain ATCC 25017 / CCUG 19701 / FSC 153 / O#319-036).